The chain runs to 378 residues: Homoserine O-acetyltransferase (378 aa).

One can recognise an AB hydrolase-1 domain in the interval 54–355 (NAILVCHALS…NNPAGHDSFL (302 aa)). The active-site Nucleophile is the Ser-159. Position 228 (Arg-228) interacts with substrate. Active-site residues include Asp-318 and His-351. Asp-352 is a substrate binding site.

Belongs to the AB hydrolase superfamily. MetX family. Homodimer.

The protein localises to the cytoplasm. The enzyme catalyses L-homoserine + acetyl-CoA = O-acetyl-L-homoserine + CoA. Its pathway is amino-acid biosynthesis; L-methionine biosynthesis via de novo pathway; O-acetyl-L-homoserine from L-homoserine: step 1/1. Functionally, transfers an acetyl group from acetyl-CoA to L-homoserine, forming acetyl-L-homoserine. The chain is Homoserine O-acetyltransferase from Leptospira biflexa serovar Patoc (strain Patoc 1 / Ames).